A 714-amino-acid polypeptide reads, in one-letter code: Fatty acid oxidation complex subunit alpha (714 aa).

Residues 1–190 (MEMASAFTLN…KLGLVDDVVP (190 aa)) form an enoyl-CoA hydratase region. Residues 306 to 714 (APLNSVGILG…FWKTTATDLQ (409 aa)) form a 3-hydroxyacyl-CoA dehydrogenase region.

In the N-terminal section; belongs to the enoyl-CoA hydratase/isomerase family. It in the central section; belongs to the 3-hydroxyacyl-CoA dehydrogenase family. In terms of assembly, heterotetramer of two alpha chains (FadJ) and two beta chains (FadI).

Its subcellular location is the cytoplasm. The enzyme catalyses a (3S)-3-hydroxyacyl-CoA = a (2E)-enoyl-CoA + H2O. It carries out the reaction a 4-saturated-(3S)-3-hydroxyacyl-CoA = a (3E)-enoyl-CoA + H2O. The catalysed reaction is a (3S)-3-hydroxyacyl-CoA + NAD(+) = a 3-oxoacyl-CoA + NADH + H(+). It catalyses the reaction (3S)-3-hydroxybutanoyl-CoA = (3R)-3-hydroxybutanoyl-CoA. The protein operates within lipid metabolism; fatty acid beta-oxidation. Catalyzes the formation of a hydroxyacyl-CoA by addition of water on enoyl-CoA. Also exhibits 3-hydroxyacyl-CoA epimerase and 3-hydroxyacyl-CoA dehydrogenase activities. This chain is Fatty acid oxidation complex subunit alpha, found in Shigella boydii serotype 4 (strain Sb227).